The primary structure comprises 156 residues: 6,7-dimethyl-8-ribityllumazine synthase (156 aa).

5-amino-6-(D-ribitylamino)uracil-binding positions include Phe-22, 56-58 (AME), and 80-82 (AVI). 85–86 (ET) provides a ligand contact to (2S)-2-hydroxy-3-oxobutyl phosphate. The active-site Proton donor is His-88. Residue Phe-113 coordinates 5-amino-6-(D-ribitylamino)uracil. A (2S)-2-hydroxy-3-oxobutyl phosphate-binding site is contributed by Arg-127.

This sequence belongs to the DMRL synthase family.

It catalyses the reaction (2S)-2-hydroxy-3-oxobutyl phosphate + 5-amino-6-(D-ribitylamino)uracil = 6,7-dimethyl-8-(1-D-ribityl)lumazine + phosphate + 2 H2O + H(+). It participates in cofactor biosynthesis; riboflavin biosynthesis; riboflavin from 2-hydroxy-3-oxobutyl phosphate and 5-amino-6-(D-ribitylamino)uracil: step 1/2. Its function is as follows. Catalyzes the formation of 6,7-dimethyl-8-ribityllumazine by condensation of 5-amino-6-(D-ribitylamino)uracil with 3,4-dihydroxy-2-butanone 4-phosphate. This is the penultimate step in the biosynthesis of riboflavin. The protein is 6,7-dimethyl-8-ribityllumazine synthase of Kosmotoga olearia (strain ATCC BAA-1733 / DSM 21960 / TBF 19.5.1).